The following is a 314-amino-acid chain: Inactive chitinase-like protein 1 (314 aa).

The first 19 residues, 1–19 (MKEIVRALEGYGPPKDKAA), serve as a signal peptide directing secretion. In terms of domain architecture, Chitin-binding type-1 spans 20-60 (EQCGWQAGGALCPGGLCCSQYGWCANTPEYCGSGCQSQCDG). Cystine bridges form between C22/C37, C31/C43, C36/C50, C54/C58, C92/C154, C166/C174, and C273/C305.

The protein belongs to the glycosyl hydrolase 19 family. Chitinase class I subfamily.

Its function is as follows. Inactive chitinase-like protein that does not exhibit hydrolytic activity toward chitin. Binds strongly to chitin and possesses antifungal activity toward the fungal pathogen Altenaria alternata in plate assays. Inhibits the growth of Fusarium oxysporum on plate assays. Probably involved in defense against fungal pathogens through a mechanism that only involves carbohydrate binding. In Hevea brasiliensis (Para rubber tree), this protein is Inactive chitinase-like protein 1.